The primary structure comprises 142 residues: Large ribosomal subunit protein bL17 (142 aa).

The protein belongs to the bacterial ribosomal protein bL17 family. Part of the 50S ribosomal subunit. Contacts protein L32.

The protein is Large ribosomal subunit protein bL17 of Wolbachia pipientis wMel.